Consider the following 630-residue polypeptide: tRNA uridine 5-carboxymethylaminomethyl modification enzyme MnmG (630 aa).

Gly-13–Gly-18 is an FAD binding site. Residue Gly-273–Phe-287 coordinates NAD(+).

Belongs to the MnmG family. In terms of assembly, homodimer. Heterotetramer of two MnmE and two MnmG subunits. FAD is required as a cofactor.

It localises to the cytoplasm. In terms of biological role, NAD-binding protein involved in the addition of a carboxymethylaminomethyl (cmnm) group at the wobble position (U34) of certain tRNAs, forming tRNA-cmnm(5)s(2)U34. The sequence is that of tRNA uridine 5-carboxymethylaminomethyl modification enzyme MnmG from Pseudomonas aeruginosa (strain LESB58).